The sequence spans 117 residues: Immunoglobulin kappa variable 1-33 (117 aa).

The N-terminal stretch at 1–22 (MDMRVPAQLLGLLLLWLSGARC) is a signal peptide. Residues 23–45 (DIQMTQSPSSLSASVGDRVTITC) are framework-1. The Ig-like domain maps to 24 to 117 (IQMTQSPSSL…YYCQQYDNLP (94 aa)). Cysteines 45 and 110 form a disulfide. The tract at residues 46-56 (QASQDISNYLN) is complementarity-determining-1. Positions 57–71 (WYQQKPGKAPKLLIY) are framework-2. Residues 72–78 (DASNLET) form a complementarity-determining-2 region. The interval 79-110 (GVPSRFSGSGSGTDFTFTISSLQPEDIATYYC) is framework-3. The tract at residues 111 to 117 (QQYDNLP) is complementarity-determining-3.

Immunoglobulins are composed of two identical heavy chains and two identical light chains; disulfide-linked.

It localises to the secreted. The protein localises to the cell membrane. Its function is as follows. V region of the variable domain of immunoglobulin light chains that participates in the antigen recognition. Immunoglobulins, also known as antibodies, are membrane-bound or secreted glycoproteins produced by B lymphocytes. In the recognition phase of humoral immunity, the membrane-bound immunoglobulins serve as receptors which, upon binding of a specific antigen, trigger the clonal expansion and differentiation of B lymphocytes into immunoglobulins-secreting plasma cells. Secreted immunoglobulins mediate the effector phase of humoral immunity, which results in the elimination of bound antigens. The antigen binding site is formed by the variable domain of one heavy chain, together with that of its associated light chain. Thus, each immunoglobulin has two antigen binding sites with remarkable affinity for a particular antigen. The variable domains are assembled by a process called V-(D)-J rearrangement and can then be subjected to somatic hypermutations which, after exposure to antigen and selection, allow affinity maturation for a particular antigen. The polypeptide is Immunoglobulin kappa variable 1-33 (Homo sapiens (Human)).